Consider the following 260-residue polypeptide: Phosphate import ATP-binding protein PstB (260 aa).

Residues 14–255 (LQIRNLDFFY…PGKKQTEDYI (242 aa)) form the ABC transporter domain. 46–53 (GPSGCGKS) provides a ligand contact to ATP.

Belongs to the ABC transporter superfamily. Phosphate importer (TC 3.A.1.7) family. The complex is composed of two ATP-binding proteins (PstB), two transmembrane proteins (PstC and PstA) and a solute-binding protein (PstS).

It is found in the cell inner membrane. It catalyses the reaction phosphate(out) + ATP + H2O = ADP + 2 phosphate(in) + H(+). Functionally, part of the ABC transporter complex PstSACB involved in phosphate import. Responsible for energy coupling to the transport system. In Thiobacillus denitrificans (strain ATCC 25259 / T1), this protein is Phosphate import ATP-binding protein PstB.